A 648-amino-acid polypeptide reads, in one-letter code: Chaperone protein DnaK (648 aa).

Threonine 200 bears the Phosphothreonine; by autocatalysis mark. The tract at residues 612 to 631 (QAGAAGAAGAAEGAAQGGAQ) is disordered.

Belongs to the heat shock protein 70 family.

Functionally, acts as a chaperone. In Burkholderia multivorans (strain ATCC 17616 / 249), this protein is Chaperone protein DnaK.